The chain runs to 485 residues: Choline/ethanolamine transporter flvcr2b (485 aa).

Over 1–46 (MDTRFNDINRVKMGDESKSVDGEVNDNTYYSKTDAEVNFEHRYTTP) the chain is Cytoplasmic. A helical membrane pass occupies residues 47–71 (ETRLYKKRWVIVCLFSSYSLCNSYQ). 2 residues coordinate choline: N68 and W72. Residues 72-89 (WIQYGIINNIFMRFYGVD) are Extracellular-facing. Residues 90-117 (SFTIDWMSMIYMLTYIPLIFPVSWLLDK) traverse the membrane as a helical segment. Residues 118-119 (KG) lie on the Cytoplasmic side of the membrane. The chain crosses the membrane as a helical span at residues 120 to 139 (LRVIALVAAALNCAGTWIKV). The Extracellular segment spans residues 140 to 146 (ASARPDL). The helical transmembrane segment at 147–175 (FPVTFLGQFTCSVAQVFILGMPSRIASVW) threads the bilayer. Choline contacts are provided by Q161 and L165. The Cytoplasmic portion of the chain corresponds to 176-180 (FGSDE). The chain crosses the membrane as a helical span at residues 181–206 (VSTACSIGVFGNQLGIAIGFLVPPIL). Residues 207 to 211 (VPNVD) lie on the Extracellular side of the membrane. A helical membrane pass occupies residues 212-241 (DLDELAAHIRVMFYITAGVATFLFVLVVIV). At 242 to 277 (FQERPEIPPTLAQAAARRISPESYSYTASILRLLRN) the chain is on the cytoplasmic side. A helical membrane pass occupies residues 278 to 308 (KAFILLVITYGLNVGCFYAVSTLLNRMIIEH). Y295 serves as a coordination point for choline. Over 309 to 312 (YPGE) the chain is Extracellular. The helical transmembrane segment at 313 to 341 (EVNAGRIGLTIVVAGMVGSLICGIWLDRS) threads the bilayer. At 342–343 (KT) the chain is on the cytoplasmic side. Residues 344–366 (YKQTTLAVYLMSLMGLVIYAFTL) traverse the membrane as a helical segment. The Extracellular portion of the chain corresponds to 367 to 369 (DLH). The helical transmembrane segment at 370 to 399 (HLWVVFITAGALGFFMTGYLPLGFEFAVEL) threads the bilayer. Residues 400–407 (TYPESEGT) are Cytoplasmic-facing. The helical transmembrane segment at 408 to 433 (SSGLLNCSAQVFGIIFTICQGKIMDS) threads the bilayer. Q417 is a choline binding site. The Extracellular portion of the chain corresponds to 434-435 (FG). Residues 436–458 (TLAGNLFLCAFLLIGTIITGCIK) traverse the membrane as a helical segment. At 459-485 (SDLRRQLANQQAQTADHLDTSPTQTRF) the chain is on the cytoplasmic side.

It belongs to the major facilitator superfamily. Feline leukemia virus subgroup C receptor (TC 2.A.1.28.1) family.

It localises to the cell membrane. Its subcellular location is the mitochondrion membrane. It is found in the endoplasmic reticulum membrane. The catalysed reaction is choline(out) = choline(in). The enzyme catalyses ethanolamine(in) = ethanolamine(out). It catalyses the reaction heme b(in) = heme b(out). Functionally, choline uniporter that specifically mediates choline uptake at the blood-brain-barrier. Responsible for the majority of choline uptake across the blood-brain-barrier from the circulation into the brain. Choline, a nutrient critical for brain development, is a precursor of phosphatidylcholine, as well as betaine. Also mediates transport of ethanolamine. Choline and ethanolamine transport is not coupled with proton transport and is exclusively driven by the choline gradient across the plasma membrane. Also acts as a heme b transporter. This is Choline/ethanolamine transporter flvcr2b from Danio rerio (Zebrafish).